A 749-amino-acid chain; its full sequence is EF-hand domain-containing family member C2 (749 aa).

DM10 domains lie at D75–G182, H226–Y368, and K431–T538. The 36-residue stretch at G558 to G593 folds into the EF-hand domain.

As to quaternary structure, microtubule inner protein component of sperm flagellar doublet microtubules. In terms of tissue distribution, expressed in airway epithelial cells.

It is found in the cytoplasm. The protein resides in the cytoskeleton. Its subcellular location is the cilium axoneme. The protein localises to the flagellum axoneme. Functionally, microtubule inner protein (MIP) part of the dynein-decorated doublet microtubules (DMTs) in cilia axoneme, which is required for motile cilia beating. The protein is EF-hand domain-containing family member C2 of Homo sapiens (Human).